Consider the following 65-residue polypeptide: Large ribosomal subunit protein bL35 (65 aa).

Belongs to the bacterial ribosomal protein bL35 family.

The chain is Large ribosomal subunit protein bL35 from Enterobacter sp. (strain 638).